A 171-amino-acid polypeptide reads, in one-letter code: Large ribosomal subunit protein bL21 (171 aa).

The segment at 144-171 is disordered; the sequence is AAPAKAEAAPKKKAAPKKAAAKTEEGEA. Positions 154–163 are enriched in basic residues; sequence KKKAAPKKAA.

Belongs to the bacterial ribosomal protein bL21 family. In terms of assembly, part of the 50S ribosomal subunit. Contacts protein L20.

This protein binds to 23S rRNA in the presence of protein L20. This chain is Large ribosomal subunit protein bL21, found in Caulobacter vibrioides (strain ATCC 19089 / CIP 103742 / CB 15) (Caulobacter crescentus).